Reading from the N-terminus, the 152-residue chain is Transcriptional regulator MraZ (152 aa).

2 consecutive SpoVT-AbrB domains span residues 5 to 52 (ATLV…PLPE) and 81 to 124 (ASEC…DEQT).

The protein belongs to the MraZ family. Forms oligomers.

Its subcellular location is the cytoplasm. It is found in the nucleoid. Negatively regulates its own expression and that of the subsequent genes in the proximal part of the division and cell wall (dcw) gene cluster. Acts by binding directly to DNA. May also regulate the expression of genes outside the dcw cluster. This chain is Transcriptional regulator MraZ, found in Erwinia tasmaniensis (strain DSM 17950 / CFBP 7177 / CIP 109463 / NCPPB 4357 / Et1/99).